Consider the following 106-residue polypeptide: UPF0145 protein AZOSEA16190 (106 aa).

This sequence belongs to the UPF0145 family.

The chain is UPF0145 protein AZOSEA16190 from Aromatoleum aromaticum (strain DSM 19018 / LMG 30748 / EbN1) (Azoarcus sp. (strain EbN1)).